The sequence spans 504 residues: Tegument protein VP16 homolog (504 aa).

3 disordered regions span residues 354–381 (EAGGGWRRSGSTRTRGRAARSTTGRLQR), 395–421 (ATPRQRLRARGEPRHTSGSGAFSQGRR), and 435–486 (RSGP…ANPF). Low complexity predominate over residues 361 to 378 (RSGSTRTRGRAARSTTGR). The segment covering 447–460 (PVRSGLGLSRARGS) has biased composition (low complexity).

Belongs to the herpesviridae tegument protein VP16 protein family. Associates with the VP16-induced complex; binding to host HCFC1 activates VP16 for association with the octamer motif-binding host protein POU2F1, to form a multiprotein-DNA complex responsible for activating transcription of the viral immediate early genes.

It is found in the virion tegument. The protein resides in the host nucleus. Transcriptional activator of immediate-early (IE) gene products (alpha genes). Acts as a key activator of lytic infection by initiating the lytic program through the assembly of the transcriptional regulatory VP16-induced complex composed of VP16 and two cellular factors, HCFC1 and POU2F1. VP16-induced complex represents a regulatory switch: when it is on, it promotes IE-gene expression and thus lytic infection, and when it is off, it limits IE-gene transcription favoring latent infection. Functionally, may play a role in the aggregation of tegument proteins around nucleocapsids during virus morphogenesis. In Bos taurus (Bovine), this protein is Tegument protein VP16 homolog.